The sequence spans 394 residues: Alanine--glyoxylate aminotransferase (394 aa).

Pyridoxal 5'-phosphate-binding positions include Ala-76 to His-78, Ser-153, and Gln-204. Substrate is bound at residue Ser-153. At Lys-205 the chain carries N6-(pyridoxal phosphate)lysine. Pyridoxal 5'-phosphate-binding residues include Tyr-256 and Thr-259. Arg-356 is a substrate binding site.

The protein belongs to the class-V pyridoxal-phosphate-dependent aminotransferase family. As to quaternary structure, homodimer. Pyridoxal 5'-phosphate serves as cofactor.

The protein localises to the peroxisome. It catalyses the reaction glyoxylate + L-alanine = glycine + pyruvate. The catalysed reaction is (2S)-2-aminobutanoate + glyoxylate = 2-oxobutanoate + glycine. The enzyme catalyses glyoxylate + L-phenylalanine = 3-phenylpyruvate + glycine. It carries out the reaction glyoxylate + L-serine = 3-hydroxypyruvate + glycine. It catalyses the reaction 2-oxobutanoate + L-alanine = (2S)-2-aminobutanoate + pyruvate. The catalysed reaction is L-phenylalanine + pyruvate = 3-phenylpyruvate + L-alanine. The enzyme catalyses L-serine + pyruvate = 3-hydroxypyruvate + L-alanine. Functionally, catalyzes the pyridoxal 5'-phosphate-dependent transamination of alanine with glyoxylate as an amino group acceptor. Can also catalyze, although with much less efficiency, the transamination of amino-butyrate, phenylalanine and serine with glyoxylate or pyruvate as an amino group acceptor. Does not catalyze the transamination of both 3-hydroxykynurenine and L-kynurenine. May play a role in the detoxification of glyoxylate, a toxic plant metabolite from the fly diet. The sequence is that of Alanine--glyoxylate aminotransferase from Drosophila melanogaster (Fruit fly).